A 96-amino-acid chain; its full sequence is Protein Vpr (96 aa).

The tract at residues 1-42 is homooligomerization; the sequence is MEQPPEDQGPQREPYNEWTLELLEELKNEAVRHFPREYLHGL. Phosphoserine; by host occurs at positions 79, 94, and 96.

Belongs to the HIV-1 VPR protein family. As to quaternary structure, homooligomer, may form homodimer. Interacts with p6-gag region of the Pr55 Gag precursor protein through a (Leu-X-X)4 motif near the C-terminus of the P6gag protein. Interacts with host UNG. May interact with host RAD23A/HHR23A. Interacts with host VPRBP/DCAF1, leading to hijack the CUL4A-RBX1-DDB1-DCAF1/VPRBP complex, mediating ubiquitination of host proteins such as TERT and ZGPAT and arrest of the cell cycle in G2 phase. Phosphorylated on several residues by host. These phosphorylations regulate VPR activity for the nuclear import of the HIV-1 pre-integration complex.

It localises to the virion. Its subcellular location is the host nucleus. The protein localises to the host extracellular space. Functionally, during virus replication, may deplete host UNG protein, and incude G2-M cell cycle arrest. Acts by targeting specific host proteins for degradation by the 26S proteasome, through association with the cellular CUL4A-DDB1 E3 ligase complex by direct interaction with host VPRPB/DCAF-1. Cell cycle arrest reportedly occurs within hours of infection and is not blocked by antiviral agents, suggesting that it is initiated by the VPR carried into the virion. Additionally, VPR induces apoptosis in a cell cycle dependent manner suggesting that these two effects are mechanistically linked. Detected in the serum and cerebrospinal fluid of AIDS patient, VPR may also induce cell death to bystander cells. In terms of biological role, during virus entry, plays a role in the transport of the viral pre-integration (PIC) complex to the host nucleus. This function is crucial for viral infection of non-dividing macrophages. May act directly at the nuclear pore complex, by binding nucleoporins phenylalanine-glycine (FG)-repeat regions. This Homo sapiens (Human) protein is Protein Vpr.